The primary structure comprises 397 residues: Enoyl-[acyl-carrier-protein] reductase [NADH] (397 aa).

NAD(+)-binding positions include Gly48 to Tyr53, Phe74 to Glu75, Asp111 to Ala112, and Leu139 to Ala140. Tyr224 is a binding site for substrate. The active-site Proton donor is Tyr234. NAD(+)-binding positions include Lys243 and Val272–Thr274.

Belongs to the TER reductase family. Monomer.

It catalyses the reaction a 2,3-saturated acyl-[ACP] + NAD(+) = a (2E)-enoyl-[ACP] + NADH + H(+). Its pathway is lipid metabolism; fatty acid biosynthesis. Functionally, involved in the final reduction of the elongation cycle of fatty acid synthesis (FAS II). Catalyzes the reduction of a carbon-carbon double bond in an enoyl moiety that is covalently linked to an acyl carrier protein (ACP). This is Enoyl-[acyl-carrier-protein] reductase [NADH] from Pseudomonas fluorescens (strain SBW25).